The sequence spans 276 residues: Dermonecrotic toxin LlSicTox-alphaIV2iv (276 aa).

The active site involves His-5. Mg(2+) is bound by residues Glu-25 and Asp-27. The Nucleophile role is filled by His-41. 2 disulfides stabilise this stretch: Cys-45–Cys-51 and Cys-47–Cys-193. Residue Asp-85 participates in Mg(2+) binding.

The protein belongs to the arthropod phospholipase D family. Class II subfamily. It depends on Mg(2+) as a cofactor. As to expression, expressed by the venom gland.

It is found in the secreted. The catalysed reaction is an N-(acyl)-sphingosylphosphocholine = an N-(acyl)-sphingosyl-1,3-cyclic phosphate + choline. The enzyme catalyses an N-(acyl)-sphingosylphosphoethanolamine = an N-(acyl)-sphingosyl-1,3-cyclic phosphate + ethanolamine. It catalyses the reaction a 1-acyl-sn-glycero-3-phosphocholine = a 1-acyl-sn-glycero-2,3-cyclic phosphate + choline. It carries out the reaction a 1-acyl-sn-glycero-3-phosphoethanolamine = a 1-acyl-sn-glycero-2,3-cyclic phosphate + ethanolamine. Functionally, dermonecrotic toxins cleave the phosphodiester linkage between the phosphate and headgroup of certain phospholipids (sphingolipid and lysolipid substrates), forming an alcohol (often choline) and a cyclic phosphate. This toxin acts on sphingomyelin (SM). It may also act on ceramide phosphoethanolamine (CPE), lysophosphatidylcholine (LPC) and lysophosphatidylethanolamine (LPE), but not on lysophosphatidylserine (LPS), and lysophosphatidylglycerol (LPG). It acts by transphosphatidylation, releasing exclusively cyclic phosphate products as second products. Induces dermonecrosis, hemolysis, increased vascular permeability, edema, inflammatory response, and platelet aggregation. The chain is Dermonecrotic toxin LlSicTox-alphaIV2iv from Loxosceles laeta (South American recluse spider).